We begin with the raw amino-acid sequence, 511 residues long: 60 kDa neurofilament protein (511 aa).

The segment at 1-32 (MSVTQKKTEISTTTTYEGESRPSSGMSGFSYS) is disordered. Residues 1-99 (MSVTQKKTEI…KANREREKQD (99 aa)) are head. A compositionally biased stretch (polar residues) spans 21-30 (RPSSGMSGFS). The region spanning 96–449 (EKQDMRDLNE…KLLEGEESRV (354 aa)) is the IF rod domain. The segment at 100-135 (MRDLNERFANYIEKVRFLEAQNKKLAGELEELKSKW) is coil 1A. The tract at residues 136–145 (GKETSAIKEM) is linker 1. Residues 146–284 (YETELEEARK…VHAQELKELA (139 aa)) are coil 1B. The linker 12 stretch occupies residues 285 to 303 (ALAYRDTTAENREFWRNEL). Residues 304-449 (AQAIRDIQQE…KLLEGEESRV (146 aa)) are coil 2. The tail stretch occupies residues 450-511 (GMKQIVEQVV…EEKKSMGSSD (62 aa)). The interval 479 to 511 (GYEATGGITTTTTTSSQERRSMSEEKKSMGSSD) is disordered. Positions 483–492 (TGGITTTTTT) are enriched in low complexity. Over residues 495-511 (QERRSMSEEKKSMGSSD) the composition is skewed to basic and acidic residues.

It belongs to the intermediate filament family.

Functionally, major squid neurofilament protein. The sequence is that of 60 kDa neurofilament protein from Doryteuthis pealeii (Longfin inshore squid).